Consider the following 418-residue polypeptide: Aspartate aminotransferase, cytoplasmic (418 aa).

The residue at position 2 (Ser-2) is an N-acetylserine. Positions 38, 135, and 188 each coordinate L-aspartate. Lys-255 bears the N6-(pyridoxal phosphate)lysine mark. Arg-387 is an L-aspartate binding site. Ser-389 carries the post-translational modification Phosphoserine.

It belongs to the class-I pyridoxal-phosphate-dependent aminotransferase family. In terms of assembly, homodimer. Pyridoxal 5'-phosphate serves as cofactor.

It is found in the cytoplasm. The protein localises to the peroxisome. It carries out the reaction L-aspartate + 2-oxoglutarate = oxaloacetate + L-glutamate. Its function is as follows. Plays a key role in amino acid metabolism. This chain is Aspartate aminotransferase, cytoplasmic (AAT2), found in Saccharomyces cerevisiae (strain ATCC 204508 / S288c) (Baker's yeast).